The sequence spans 672 residues: Fumonisin cluster-specific transcription factor FUM21 (672 aa).

A DNA-binding region (zn(2)-C6 fungal-type) is located at residues 30–56; the sequence is CESCKRRKVRCNGTNPCNQCQKSSIEC. Disordered stretches follow at residues 65 to 111 and 190 to 212; these read ANDG…RFDG and KSSG…GFNT. Over residues 77 to 93 the composition is skewed to polar residues; that stretch reads SPVQHTRGSLTPPQTSP.

The protein resides in the nucleus. Functionally, transcription factor that regulates the expression of the gene cluster that mediates the biosynthesis of fumonisins B1 (FB1), B2 (FB2), B3 (FB3), and B4 (FB4), which are carcinogenic mycotoxins. The sequence is that of Fumonisin cluster-specific transcription factor FUM21 (FUM21) from Gibberella moniliformis (strain M3125 / FGSC 7600) (Maize ear and stalk rot fungus).